A 222-amino-acid polypeptide reads, in one-letter code: Protein-L-isoaspartate O-methyltransferase (222 aa).

Residue serine 68 is part of the active site.

The protein belongs to the methyltransferase superfamily. L-isoaspartyl/D-aspartyl protein methyltransferase family.

The protein localises to the cytoplasm. The catalysed reaction is [protein]-L-isoaspartate + S-adenosyl-L-methionine = [protein]-L-isoaspartate alpha-methyl ester + S-adenosyl-L-homocysteine. Its function is as follows. Catalyzes the methyl esterification of L-isoaspartyl residues in peptides and proteins that result from spontaneous decomposition of normal L-aspartyl and L-asparaginyl residues. It plays a role in the repair and/or degradation of damaged proteins. The chain is Protein-L-isoaspartate O-methyltransferase from Koribacter versatilis (strain Ellin345).